A 500-amino-acid chain; its full sequence is Serine carboxypeptidase 3 (500 aa).

Residues 1–21 (MATARVSLILLVVVLAASACA) form the signal peptide. The propeptide occupies 22–73 (EGLRLPRDAKFPAAQAERLIRSLNLLPKEAGPTGAGDVPSVAPGELLERRVT). 3 disulfide bridges follow: cysteine 126–cysteine 366, cysteine 294–cysteine 309, and cysteine 332–cysteine 337. Residue asparagine 144 is glycosylated (N-linked (GlcNAc...) asparagine). Serine 216 is an active-site residue. Aspartate 404 is a catalytic residue. Position 407 (cysteine 407) interacts with substrate. Histidine 461 is an active-site residue. Positions 485–500 (EEWLAELPEQPMYAAM) are excised as a propeptide.

It belongs to the peptidase S10 family. In terms of assembly, monomer.

It catalyses the reaction Release of a C-terminal amino acid with broad specificity.. This is Serine carboxypeptidase 3 (CBP3) from Oryza sativa subsp. japonica (Rice).